The following is a 207-amino-acid chain: Peptidyl-tRNA hydrolase (207 aa).

Tyrosine 14 contacts tRNA. Histidine 19 serves as the catalytic Proton acceptor. Residues phenylalanine 68, asparagine 70, and asparagine 116 each coordinate tRNA.

It belongs to the PTH family. Monomer.

Its subcellular location is the cytoplasm. It catalyses the reaction an N-acyl-L-alpha-aminoacyl-tRNA + H2O = an N-acyl-L-amino acid + a tRNA + H(+). Functionally, hydrolyzes ribosome-free peptidyl-tRNAs (with 1 or more amino acids incorporated), which drop off the ribosome during protein synthesis, or as a result of ribosome stalling. Catalyzes the release of premature peptidyl moieties from peptidyl-tRNA molecules trapped in stalled 50S ribosomal subunits, and thus maintains levels of free tRNAs and 50S ribosomes. The polypeptide is Peptidyl-tRNA hydrolase (Hyphomonas neptunium (strain ATCC 15444)).